We begin with the raw amino-acid sequence, 323 residues long: Nucleotide-binding protein ZMO1325 (323 aa).

Residue 25-32 (GLSGAGKS) coordinates ATP. 78–81 (DSRT) lines the GTP pocket.

It belongs to the RapZ-like family.

Its function is as follows. Displays ATPase and GTPase activities. The sequence is that of Nucleotide-binding protein ZMO1325 from Zymomonas mobilis subsp. mobilis (strain ATCC 31821 / ZM4 / CP4).